We begin with the raw amino-acid sequence, 395 residues long: Cyclin-A2 (395 aa).

Residues 1 to 93 (MLAEQENQEN…EEAADAPGLR (93 aa)) are disordered. Residues 27 to 60 (ALGLLRGGPARPGPAAQAARNGEGRGAAAGQQQQ) are compositionally biased toward low complexity.

Belongs to the cyclin family. Cyclin AB subfamily. Interacts with the CDK1 and CDK2 protein kinases to form serine/threonine kinase holoenzyme complexes.

Its subcellular location is the nucleus. The protein localises to the cytoplasm. In terms of biological role, cyclin which controls both the G1/S and the G2/M transition phases of the cell cycle. Functions through the formation of specific serine/threonine kinase holoenzyme complexes with the cyclin-dependent protein kinases CDK1 and CDK2. The cyclin subunit confers the substrate specificity of these complexes and differentially interacts with and activates CDK1 and CDK2 throughout the cell cycle. This Gallus gallus (Chicken) protein is Cyclin-A2.